The following is a 179-amino-acid chain: Large ribosomal subunit protein uL5 (179 aa).

This sequence belongs to the universal ribosomal protein uL5 family. As to quaternary structure, part of the 50S ribosomal subunit; part of the 5S rRNA/L5/L18/L25 subcomplex. Contacts the 5S rRNA and the P site tRNA. Forms a bridge to the 30S subunit in the 70S ribosome.

This is one of the proteins that bind and probably mediate the attachment of the 5S RNA into the large ribosomal subunit, where it forms part of the central protuberance. In the 70S ribosome it contacts protein S13 of the 30S subunit (bridge B1b), connecting the 2 subunits; this bridge is implicated in subunit movement. Contacts the P site tRNA; the 5S rRNA and some of its associated proteins might help stabilize positioning of ribosome-bound tRNAs. The protein is Large ribosomal subunit protein uL5 of Anaplasma marginale (strain Florida).